Here is a 265-residue protein sequence, read N- to C-terminus: Small ribosomal subunit protein eS1 (265 aa).

2 disordered regions span residues 1 to 24 (MTQGKNPGLKAGGGKKGAKKRTID) and 240 to 265 (HEKKGEKATGRDGAPEEQAAQNLLAQ). The segment covering 240–253 (HEKKGEKATGRDGA) has biased composition (basic and acidic residues).

This sequence belongs to the eukaryotic ribosomal protein eS1 family. Component of the small ribosomal subunit. Mature ribosomes consist of a small (40S) and a large (60S) subunit. The 40S subunit contains about 33 different proteins and 1 molecule of RNA (18S). The 60S subunit contains about 49 different proteins and 3 molecules of RNA (25S, 5.8S and 5S).

The protein localises to the cytoplasm. The chain is Small ribosomal subunit protein eS1 from Tetrahymena thermophila (strain SB210).